The primary structure comprises 752 residues: Microtubule-associated protein tau (752 aa).

Residues 1 to 567 (MAEPRQEFDT…PVPMPDLKNV (567 aa)) are disordered. Ala-2 carries the post-translational modification N-acetylalanine. Tyr-18 carries the post-translational modification Phosphotyrosine. Lys-33 participates in a covalent cross-link: Glycyl lysine isopeptide (Lys-Gly) (interchain with G-Cter in ubiquitin). A phosphoserine mark is found at Ser-35 and Ser-50. The span at 50–60 (SETSDAKSTPT) shows a compositional bias: polar residues. Thr-58, Thr-60, and Thr-100 each carry phosphothreonine. Over residues 142–151 (SDWTHQQVPS) the composition is skewed to polar residues. Over residues 173–182 (RPEDVERSHP) the composition is skewed to basic and acidic residues. Ser-191 and Ser-204 each carry phosphoserine. Over residues 192–204 (PQKEAWGKDRLGS) the composition is skewed to basic and acidic residues. Over residues 205 to 218 (EEEVDEDITMDESS) the composition is skewed to acidic residues. The span at 219-229 (QESPPSQASLA) shows a compositional bias: low complexity. The segment covering 233 to 252 (ATPQARSVSASGVSGETTSI) has biased composition (polar residues). 2 stretches are compositionally biased toward basic and acidic residues: residues 289 to 313 (EEGH…KEQD) and 374 to 385 (SKDRTGNDEKKA). 2 stretches are compositionally biased toward polar residues: residues 387-400 (TSTP…SNRP) and 432-446 (KYVS…SPGT). Thr-464 bears the Phosphothreonine mark. Arg-466 bears the Omega-N-methylarginine mark. Lys-474 is modified (N6,N6-dimethyllysine; alternate). Position 474 is an N6-acetyllysine; alternate (Lys-474). 3 positions are modified to phosphothreonine: Thr-480, Thr-486, and Thr-487. Phosphoserine is present on Ser-489. The residue at position 492 (Thr-492) is a Phosphothreonine. 3 positions are modified to phosphoserine: Ser-496, Ser-502, and Ser-506. The span at 498–525 (EPPKSGERSGYSSPGSPGTPGSRSRTPS) shows a compositional bias: low complexity. Tyr-508 bears the Phosphotyrosine mark. Phosphoserine occurs at positions 509 and 510. Ser-513 carries the post-translational modification Phosphoserine; by CK1, PDPK1 and TTBK1. Residues Thr-516 and Thr-523 each carry the phosphothreonine modification. A Phosphoserine modification is found at Ser-525. At Thr-528 the chain carries Phosphothreonine. Lys-536 is modified (N6-acetyllysine). The residue at position 542 (Thr-542) is a Phosphothreonine. Phosphoserine occurs at positions 546 and 548. Tau/MAP repeat units follow at residues 555–585 (QTAP…GGGK), 586–616 (VQII…GGGS), 617–647 (VHIV…GGGQ), and 648–679 (VEVK…GGGN). Lys-565 participates in a covalent cross-link: Glycyl lysine isopeptide (Lys-Gly) (interchain with G-Cter in ubiquitin). Lys-570 carries the N6-acetyllysine; alternate modification. At Lys-570 the chain carries N6-methyllysine; alternate. Lys-570 is covalently cross-linked (Glycyl lysine isopeptide (Lys-Gly) (interchain with G-Cter in ubiquitin); alternate). A Phosphoserine modification is found at Ser-573. Lys-578 participates in a covalent cross-link: Glycyl lysine isopeptide (Lys-Gly) (interchain with G-Cter in ubiquitin). The residue at position 592 (Lys-592) is an N6-acetyllysine; alternate. Residue Lys-592 forms a Glycyl lysine isopeptide (Lys-Gly) (interchain with G-Cter in ubiquitin); alternate linkage. Residues Ser-596 and Ser-600 each carry the phosphoserine modification. Lys-601 is subject to N6-acetyllysine. Cys-602 and Cys-633 are oxidised to a cystine. Ser-604 is modified (phosphoserine). An N6-acetyllysine; alternate modification is found at Lys-609. Lys-609 is covalently cross-linked (Glycyl lysine isopeptide (Lys-Gly) (interchain with G-Cter in ubiquitin); alternate). Ser-616 bears the Phosphoserine mark. N6,N6-dimethyllysine; alternate is present on Lys-622. 3 positions are modified to N6-acetyllysine; alternate: Lys-622, Lys-628, and Lys-632. Residues Lys-622, Lys-628, and Lys-632 each participate in a glycyl lysine isopeptide (Lys-Gly) (interchain with G-Cter in ubiquitin); alternate cross-link. Ser-635 is subject to Phosphoserine. Residues Lys-642, Lys-654, and Lys-658 each carry the N6-acetyllysine; alternate modification. Residues Lys-642, Lys-654, and Lys-658 each participate in a glycyl lysine isopeptide (Lys-Gly) (interchain with G-Cter in ubiquitin); alternate cross-link. The residue at position 660 (Arg-660) is an Omega-N-methylarginine. At Ser-663 the chain carries Phosphoserine. Lys-664 participates in a covalent cross-link: Glycyl lysine isopeptide (Lys-Gly) (interchain with G-Cter in ubiquitin). Phosphoserine is present on Ser-667. Lys-680 is modified (N6-acetyllysine; alternate). Lys-680 is covalently cross-linked (Glycyl lysine isopeptide (Lys-Gly) (interchain with G-Cter in ubiquitin); alternate). Lys-686 participates in a covalent cross-link: Glycyl lysine isopeptide (Lys-Gly) (interchain with G-Cter in ubiquitin). Lys-696 bears the N6-acetyllysine; alternate mark. A Glycyl lysine isopeptide (Lys-Gly) (interchain with G-Cter in ubiquitin); alternate cross-link involves residue Lys-696. Tyr-705 is subject to Phosphotyrosine. Ser-707 is modified (phosphoserine; by CK1 and PDPK1). The residue at position 711 (Ser-711) is a Phosphoserine. Thr-714 carries the phosphothreonine modification. Ser-715 is subject to Phosphoserine; by CK1 and PDPK1. A phosphoserine mark is found at Ser-720, Ser-727, and Ser-733. A Phosphothreonine modification is found at Thr-738.

As to quaternary structure, interacts with MARK1, MARK2, MARK3 and MARK4. Interacts with SQSTM1 when polyubiquitinated. Interacts with PSMC2 through SQSTM1. Interacts with FKBP4. Binds to CSNK1D. Interacts with SGK1. Interacts with EPM2A; the interaction dephosphorylates MAPT at Ser-388. Interacts with PIN1. Interacts with LRRK2. Interacts with LRP1, leading to endocytosis; this interaction is reduced in the presence of LRPAP1/RAP. Post-translationally, polyubiquitinated. Requires functional TRAF6 and may provoke SQSTM1-dependent degradation by the proteasome. Phosphorylated at various serine and threonine residues in S-P or T-P motifs by proline-directed protein kinases (PDPK1, CDK1, CDK5, GSK3, MAPK) (a few sites per protein in interphase, more in mitosis), and at serine residues in K-X-G-S motifs by MAP/microtubule affinity-regulating kinase (MARK1, MARK2, MARK3, MARK4), causing detachment from microtubules, and their disassembly. Fetal Tau is much more phosphorylated than adult Tau. Phosphorylation at Ser-573 by BRSK1 and BRSK2 in neurons affects ability to bind microtubules and plays a role in neuron polarization. Phosphorylated by PHK. Dephosphorylation at several serine and threonine residues by the serine/threonine phosphatase PPP5C. Phosphorylation at Ser-204 by SGK1 mediates microtubule depolymerization and neurite formation in hippocampal neurons. Expressed in neurons. The larger forms (isoform tau-A and isoform tau-B) are preferentially expressed in the peripheral nervous system while the other are expressed in the central nervous system. Low amounts of the larger forms are also found in limited areas of the CNS.

The protein localises to the cytoplasm. It is found in the cytosol. The protein resides in the cell membrane. It localises to the cytoskeleton. Its subcellular location is the cell projection. The protein localises to the axon. It is found in the dendrite. The protein resides in the secreted. Functionally, promotes microtubule assembly and stability, and might be involved in the establishment and maintenance of neuronal polarity. The C-terminus binds axonal microtubules while the N-terminus binds neural plasma membrane components, suggesting that tau functions as a linker protein between both. Axonal polarity is predetermined by tau localization (in the neuronal cell) in the domain of the cell body defined by the centrosome. The short isoforms allow plasticity of the cytoskeleton whereas the longer isoforms may preferentially play a role in its stabilization. This is Microtubule-associated protein tau from Rattus norvegicus (Rat).